Here is a 471-residue protein sequence, read N- to C-terminus: Alpha-galactosidase 2 (471 aa).

Residues 1-18 form the signal peptide; the sequence is MFAFYFLTACISLKGVFG. Cysteine 42 and cysteine 74 are disulfide-bonded. Substrate is bound by residues aspartate 72 and aspartate 73. N-linked (GlcNAc...) asparagine glycosylation occurs at asparagine 105. A disulfide bridge links cysteine 121 with cysteine 151. Substrate is bound at residue lysine 147. Aspartate 149 acts as the Nucleophile in catalysis. An N-linked (GlcNAc...) asparagine glycan is attached at asparagine 175. Arginine 205 is a binding site for substrate. Catalysis depends on aspartate 209, which acts as the Proton donor. Disulfide bonds link cysteine 221–cysteine 237 and cysteine 223–cysteine 230. Glutamine 251 lines the substrate pocket. N-linked (GlcNAc...) asparagine glycosylation is found at asparagine 270, asparagine 370, asparagine 403, asparagine 413, asparagine 422, asparagine 435, and asparagine 454.

Belongs to the glycosyl hydrolase 27 family. Homotetramer.

Its subcellular location is the secreted. The enzyme catalyses Hydrolysis of terminal, non-reducing alpha-D-galactose residues in alpha-D-galactosides, including galactose oligosaccharides, galactomannans and galactolipids.. This is Alpha-galactosidase 2 (MEL2) from Saccharomyces cerevisiae (Baker's yeast).